The following is a 652-amino-acid chain: Chaperone protein HtpG (652 aa).

Residues 1 to 351 form an a; substrate-binding region; that stretch reads MTEHVEQLEF…AQDLSLNVSR (351 aa). Positions 352–568 are b; that stretch reads EILQQDRQIQ…VFDFTPMLER (217 aa). The segment at 569–652 is c; the sequence is MYRASGQPVP…ILTDRLTRTL (84 aa).

The protein belongs to the heat shock protein 90 family. As to quaternary structure, homodimer.

It is found in the cytoplasm. Molecular chaperone. Has ATPase activity. This chain is Chaperone protein HtpG, found in Nocardia farcinica (strain IFM 10152).